A 159-amino-acid chain; its full sequence is Large ribosomal subunit protein uL23m (159 aa).

This sequence belongs to the universal ribosomal protein uL23 family. As to quaternary structure, component of the mitochondrial ribosome large subunit (39S) which comprises a 16S rRNA and about 50 distinct proteins.

It localises to the mitochondrion. In Caenorhabditis briggsae, this protein is Large ribosomal subunit protein uL23m (mrpl-23).